Here is a 238-residue protein sequence, read N- to C-terminus: tRNA (guanine-N(7)-)-methyltransferase (238 aa).

S-adenosyl-L-methionine-binding residues include glutamate 70, aspartate 95, aspartate 122, and aspartate 145. Aspartate 145 is an active-site residue. Residues lysine 149, aspartate 181, and 216–219 contribute to the substrate site; that span reads TKFE.

The protein belongs to the class I-like SAM-binding methyltransferase superfamily. TrmB family.

The enzyme catalyses guanosine(46) in tRNA + S-adenosyl-L-methionine = N(7)-methylguanosine(46) in tRNA + S-adenosyl-L-homocysteine. Its pathway is tRNA modification; N(7)-methylguanine-tRNA biosynthesis. Catalyzes the formation of N(7)-methylguanine at position 46 (m7G46) in tRNA. The protein is tRNA (guanine-N(7)-)-methyltransferase of Neisseria meningitidis serogroup A / serotype 4A (strain DSM 15465 / Z2491).